The sequence spans 518 residues: MAASMARLWWPFLARQGLRSRGRCVCSQNPRRSFATEKRVRNLLYEHAREGYSELPYLDMESVCACPEKAARSLELRKGELRPADLPAIISTWQELRQLREQIRSLEAEKEAVAEAVRALLANQDSDQVQKDPQYQGLRARGREIRKQLTPLYPQETQLEEQLYQQALRLPNQTHPDTPVGDESQARVVRVVGEKPAFSFQPRGHLEIGEKLDIIRQKRLSHVSGHRSYYLRGAGALLQHGLVNFTLSKLVSRGFTPMTVPDLLRGAVFEGCGMTPNANPSQIYNIDPSRFEDLNLAGTAEVGLAGYFMDHSVAFRDLPVRMVCASTCYRAETDTGKEPWGLYRVHHFTKVEMFGVTGPGLEQSSQLLDEFLSLQVEILTELGLHFRVLDMPTQELGLPAYRKFDIEAWMPGRGRYGEVTSASNCTDFQSRRLYIMFETETGELQFAHTVNATACAVPRVLIALLESNQQKDGSVLVPAALQPYLGTDRITAPTHVPLQYIGPNQPQKPRLPGQSATR.

Residues 1 to 34 (MAASMARLWWPFLARQGLRSRGRCVCSQNPRRSF) constitute a mitochondrion transit peptide. Lysine 110 carries the post-translational modification N6-acetyllysine. An N6-succinyllysine modification is found at lysine 195. 299–301 (TAE) serves as a coordination point for L-serine. An ATP-binding site is contributed by 330 to 332 (RAE). Position 337 is an N6-succinyllysine (lysine 337). Valine 345 contacts ATP. Glutamate 352 provides a ligand contact to L-serine. Residue 418-421 (EVTS) coordinates ATP. Residue threonine 453 coordinates L-serine. A disordered region spans residues 497–518 (PLQYIGPNQPQKPRLPGQSATR).

Belongs to the class-II aminoacyl-tRNA synthetase family. Type-1 seryl-tRNA synthetase subfamily. As to quaternary structure, homodimer. The tRNA molecule probably binds across the dimer. As to expression, ubiquitous.

Its subcellular location is the mitochondrion matrix. The enzyme catalyses tRNA(Ser) + L-serine + ATP = L-seryl-tRNA(Ser) + AMP + diphosphate + H(+). It catalyses the reaction tRNA(Sec) + L-serine + ATP = L-seryl-tRNA(Sec) + AMP + diphosphate + H(+). Its pathway is aminoacyl-tRNA biosynthesis; selenocysteinyl-tRNA(Sec) biosynthesis; L-seryl-tRNA(Sec) from L-serine and tRNA(Sec): step 1/1. Its function is as follows. Catalyzes the attachment of serine to tRNA(Ser). Is also probably able to aminoacylate tRNA(Sec) with serine, to form the misacylated tRNA L-seryl-tRNA(Sec), which will be further converted into selenocysteinyl-tRNA(Sec). The chain is Serine--tRNA ligase, mitochondrial (Sars2) from Mus musculus (Mouse).